Here is a 257-residue protein sequence, read N- to C-terminus: Diaminopimelate epimerase (257 aa).

Positions 6 and 57 each coordinate substrate. Cys66 (proton donor) is an active-site residue. Residues 67 to 68 (GN), Asn170, and 188 to 189 (ER) each bind substrate. Catalysis depends on Cys198, which acts as the Proton acceptor. 199–200 (GT) contacts substrate.

Belongs to the diaminopimelate epimerase family. In terms of assembly, homodimer.

The protein localises to the cytoplasm. The catalysed reaction is (2S,6S)-2,6-diaminopimelate = meso-2,6-diaminopimelate. The protein operates within amino-acid biosynthesis; L-lysine biosynthesis via DAP pathway; DL-2,6-diaminopimelate from LL-2,6-diaminopimelate: step 1/1. In terms of biological role, catalyzes the stereoinversion of LL-2,6-diaminopimelate (L,L-DAP) to meso-diaminopimelate (meso-DAP), a precursor of L-lysine and an essential component of the bacterial peptidoglycan. The protein is Diaminopimelate epimerase of Chlorobaculum tepidum (strain ATCC 49652 / DSM 12025 / NBRC 103806 / TLS) (Chlorobium tepidum).